Reading from the N-terminus, the 155-residue chain is SsrA-binding protein (155 aa).

A disordered region spans residues 136–155 (RESLKRRQDQRDMQRAMKNY).

This sequence belongs to the SmpB family.

The protein localises to the cytoplasm. Required for rescue of stalled ribosomes mediated by trans-translation. Binds to transfer-messenger RNA (tmRNA), required for stable association of tmRNA with ribosomes. tmRNA and SmpB together mimic tRNA shape, replacing the anticodon stem-loop with SmpB. tmRNA is encoded by the ssrA gene; the 2 termini fold to resemble tRNA(Ala) and it encodes a 'tag peptide', a short internal open reading frame. During trans-translation Ala-aminoacylated tmRNA acts like a tRNA, entering the A-site of stalled ribosomes, displacing the stalled mRNA. The ribosome then switches to translate the ORF on the tmRNA; the nascent peptide is terminated with the 'tag peptide' encoded by the tmRNA and targeted for degradation. The ribosome is freed to recommence translation, which seems to be the essential function of trans-translation. In Nostoc sp. (strain PCC 7120 / SAG 25.82 / UTEX 2576), this protein is SsrA-binding protein.